Here is a 151-residue protein sequence, read N- to C-terminus: Large ribosomal subunit protein bL9 (151 aa).

Belongs to the bacterial ribosomal protein bL9 family.

Functionally, binds to the 23S rRNA. This Azoarcus sp. (strain BH72) protein is Large ribosomal subunit protein bL9.